A 354-amino-acid chain; its full sequence is MIETDKLAAERIIAATPVSPNEEAFERALRPRQLEEYVGQEKVRGQLEIFIEAAKRRSESLDHVLLFGPPGLGKTTLAHIIAREMGVNLRQTSGPVLERAGDLAALLTNLEANDVLFIDEIHRLSPVVEEILYPALEDYQIDIMIGEGPAARSVKLDLQPFTLVGATTRAGMLTNPLRDRFGIVARLEFYNAEELARIVTRSASLLNAQIHPDGAFEIAKRARGTPRIANRLLRRVRDFAEVKADGNITAQVADAALKMLDVDAVGFDLMDRKLLEAILHKFDGGPVGVDNLAAAIGEERDTIEDVLEPYLIQQGFLQRTPRGRVATLLTYRHFGLAAPDSSSGLPGLWDSAAT.

Residues 4–190 form a large ATPase domain (RuvB-L) region; it reads TDKLAAERII…FGIVARLEFY (187 aa). ATP-binding positions include Leu29, Arg30, Gly71, Lys74, Thr75, Thr76, 137–139, Arg180, Tyr190, and Arg227; that span reads EDY. Residue Thr75 participates in Mg(2+) binding. Residues 191 to 261 are small ATPAse domain (RuvB-S); the sequence is NAEELARIVT…VADAALKMLD (71 aa). Positions 264 to 354 are head domain (RuvB-H); that stretch reads AVGFDLMDRK…LPGLWDSAAT (91 aa). Residues Arg300, Arg319, and Arg324 each coordinate DNA.

It belongs to the RuvB family. Homohexamer. Forms an RuvA(8)-RuvB(12)-Holliday junction (HJ) complex. HJ DNA is sandwiched between 2 RuvA tetramers; dsDNA enters through RuvA and exits via RuvB. An RuvB hexamer assembles on each DNA strand where it exits the tetramer. Each RuvB hexamer is contacted by two RuvA subunits (via domain III) on 2 adjacent RuvB subunits; this complex drives branch migration. In the full resolvosome a probable DNA-RuvA(4)-RuvB(12)-RuvC(2) complex forms which resolves the HJ.

The protein localises to the cytoplasm. It catalyses the reaction ATP + H2O = ADP + phosphate + H(+). The RuvA-RuvB-RuvC complex processes Holliday junction (HJ) DNA during genetic recombination and DNA repair, while the RuvA-RuvB complex plays an important role in the rescue of blocked DNA replication forks via replication fork reversal (RFR). RuvA specifically binds to HJ cruciform DNA, conferring on it an open structure. The RuvB hexamer acts as an ATP-dependent pump, pulling dsDNA into and through the RuvAB complex. RuvB forms 2 homohexamers on either side of HJ DNA bound by 1 or 2 RuvA tetramers; 4 subunits per hexamer contact DNA at a time. Coordinated motions by a converter formed by DNA-disengaged RuvB subunits stimulates ATP hydrolysis and nucleotide exchange. Immobilization of the converter enables RuvB to convert the ATP-contained energy into a lever motion, pulling 2 nucleotides of DNA out of the RuvA tetramer per ATP hydrolyzed, thus driving DNA branch migration. The RuvB motors rotate together with the DNA substrate, which together with the progressing nucleotide cycle form the mechanistic basis for DNA recombination by continuous HJ branch migration. Branch migration allows RuvC to scan DNA until it finds its consensus sequence, where it cleaves and resolves cruciform DNA. This Paraburkholderia phytofirmans (strain DSM 17436 / LMG 22146 / PsJN) (Burkholderia phytofirmans) protein is Holliday junction branch migration complex subunit RuvB.